A 372-amino-acid polypeptide reads, in one-letter code: E3 ubiquitin-protein ligase RNF34 (372 aa).

Residues 56–107 (EGPNIVCKACGLSFSVFRKKHVCCDCKKDFCSVCSVLQENLRRCSTCHLLQE) form an FYVE-type zinc finger. The 20-residue stretch at 115–134 (LMRLKVKDLRQYLILRNIPT) folds into the SAP 1 domain. Ser-169 is modified (phosphoserine). A disordered region spans residues 194–252 (QGELMDGDQTSRSGVPAQVQSEITSANTEDDDDDDDEDDDDEEENAEDQNPGLSKERVR). Positions 201–220 (DQTSRSGVPAQVQSEITSAN) are enriched in polar residues. A compositionally biased stretch (acidic residues) spans 221-240 (TEDDDDDDDEDDDDEEENAE). Residues Ser-254 and Ser-256 each carry the phosphoserine modification. An SAP 2 domain is found at 264-278 (VEGMSVRQLKEILAR). An RING-type zinc finger spans residues 325–360 (CRICMDAVIDCVLLECGHMVTCTKCGKRMSECPICR).

In terms of assembly, interacts with CASP8 and CASP10. Interacts with p53/TP53; involved in p53/TP53 ubiquitination. Interacts (via RING-type zinc finger) with MDM2; the interaction stabilizes MDM2. Interacts (via RING-type zinc finger) with PPARGC1A. Interacts with NOD1. Autoubiquitinated (in vitro). In terms of processing, proteolytically cleaved by caspases upon induction of apoptosis by TNF.

The protein localises to the cell membrane. It is found in the endomembrane system. The protein resides in the nucleus. Its subcellular location is the nucleus speckle. It localises to the cytoplasm. The protein localises to the cytosol. It catalyses the reaction S-ubiquitinyl-[E2 ubiquitin-conjugating enzyme]-L-cysteine + [acceptor protein]-L-lysine = [E2 ubiquitin-conjugating enzyme]-L-cysteine + N(6)-ubiquitinyl-[acceptor protein]-L-lysine.. Its pathway is protein modification; protein ubiquitination. In terms of biological role, E3 ubiquitin-protein ligase that regulates several biological processes through the ubiquitin-mediated proteasomal degradation of various target proteins. Ubiquitinates the caspases CASP8 and CASP10, promoting their proteasomal degradation, to negatively regulate cell death downstream of death domain receptors in the extrinsic pathway of apoptosis. May mediate 'Lys-48'-linked polyubiquitination of RIPK1 and its subsequent proteasomal degradation thereby indirectly regulating the tumor necrosis factor-mediated signaling pathway. Negatively regulates p53/TP53 through its direct ubiquitination and targeting to proteasomal degradation. Indirectly, may also negatively regulate p53/TP53 through ubiquitination and degradation of SFN. Mediates PPARGC1A proteasomal degradation probably through ubiquitination thereby indirectly regulating the metabolism of brown fat cells. Possibly involved in innate immunity, through 'Lys-48'-linked polyubiquitination of NOD1 and its subsequent proteasomal degradation. This is E3 ubiquitin-protein ligase RNF34 (RNF34) from Pongo abelii (Sumatran orangutan).